The primary structure comprises 607 residues: Elongation factor 4 (607 aa).

The tr-type G domain maps to 11–193 (KNIRNFSIIA…KIVEVVPPPE (183 aa)). GTP contacts are provided by residues 23–28 (DHGKST) and 140–143 (NKID).

The protein belongs to the TRAFAC class translation factor GTPase superfamily. Classic translation factor GTPase family. LepA subfamily.

The protein resides in the cell membrane. It catalyses the reaction GTP + H2O = GDP + phosphate + H(+). Required for accurate and efficient protein synthesis under certain stress conditions. May act as a fidelity factor of the translation reaction, by catalyzing a one-codon backward translocation of tRNAs on improperly translocated ribosomes. Back-translocation proceeds from a post-translocation (POST) complex to a pre-translocation (PRE) complex, thus giving elongation factor G a second chance to translocate the tRNAs correctly. Binds to ribosomes in a GTP-dependent manner. The chain is Elongation factor 4 from Staphylococcus saprophyticus subsp. saprophyticus (strain ATCC 15305 / DSM 20229 / NCIMB 8711 / NCTC 7292 / S-41).